Reading from the N-terminus, the 182-residue chain is Isopentenyl-diphosphate Delta-isomerase (182 aa).

2 residues coordinate Mn(2+): His-25 and His-32. The Nudix hydrolase domain maps to 30–164 (LLHLAFSSWL…PWAFSPWMVM (135 aa)). Cys-67 is a catalytic residue. His-69 is a Mn(2+) binding site. Glu-87 is a Mg(2+) binding site. Positions 114 and 116 each coordinate Mn(2+). The active site involves Glu-116.

Belongs to the IPP isomerase type 1 family. As to quaternary structure, homodimer. Mg(2+) serves as cofactor. It depends on Mn(2+) as a cofactor.

The protein localises to the cytoplasm. It catalyses the reaction isopentenyl diphosphate = dimethylallyl diphosphate. Its pathway is isoprenoid biosynthesis; dimethylallyl diphosphate biosynthesis; dimethylallyl diphosphate from isopentenyl diphosphate: step 1/1. Its function is as follows. Catalyzes the 1,3-allylic rearrangement of the homoallylic substrate isopentenyl (IPP) to its highly electrophilic allylic isomer, dimethylallyl diphosphate (DMAPP). This Escherichia coli (strain ATCC 8739 / DSM 1576 / NBRC 3972 / NCIMB 8545 / WDCM 00012 / Crooks) protein is Isopentenyl-diphosphate Delta-isomerase.